A 213-amino-acid polypeptide reads, in one-letter code: Probable nicotinate-nucleotide adenylyltransferase (213 aa).

It belongs to the NadD family.

It catalyses the reaction nicotinate beta-D-ribonucleotide + ATP + H(+) = deamido-NAD(+) + diphosphate. The protein operates within cofactor biosynthesis; NAD(+) biosynthesis; deamido-NAD(+) from nicotinate D-ribonucleotide: step 1/1. Catalyzes the reversible adenylation of nicotinate mononucleotide (NaMN) to nicotinic acid adenine dinucleotide (NaAD). This chain is Probable nicotinate-nucleotide adenylyltransferase, found in Salmonella gallinarum (strain 287/91 / NCTC 13346).